An 860-amino-acid chain; its full sequence is DNA primase (860 aa).

The segment at 804 to 842 (CLNRQHRGNRDNVLVYIQLKADGNRLILILWSTCFATKC) adopts a CHC2-type zinc-finger fold.

The protein belongs to the herpesviridae DNA primase family. As to quaternary structure, associates with the helicase and the primase-associated factor to form the helicase-primase factor.

The protein localises to the host nucleus. Essential component of the helicase/primase complex. Unwinds the DNA at the replication forks and generates single-stranded DNA for both leading and lagging strand synthesis. The primase initiates primer synthesis and thereby produces large amount of short RNA primers on the lagging strand that the polymerase elongates using dNTPs. The chain is DNA primase (U43) from Homo sapiens (Human).